Consider the following 570-residue polypeptide: Aspartyl aminopeptidase (570 aa).

Zn(2+) is bound at residue histidine 86. Position 160 (histidine 160) interacts with substrate. Aspartate 324 is a Zn(2+) binding site. Glutamate 379 provides a ligand contact to substrate. The Zn(2+) site is built by glutamate 380 and aspartate 434. Residues aspartate 434, histidine 437, lysine 462, and tyrosine 469 each contribute to the substrate site. Position 534 (histidine 534) interacts with Zn(2+).

It belongs to the peptidase M18 family. As to quaternary structure, homododecamer composed of homodimers and homotrimers that assemble into a tetrahedron shape to create a central tunnel containing the active sites. Homooctamer. Zn(2+) is required as a cofactor.

The protein resides in the cytoplasm. It catalyses the reaction Release of an N-terminal aspartate or glutamate from a peptide, with a preference for aspartate.. With respect to regulation, activated by Co(2+). Inhibited by high concentrations (&gt;1mM) of Zn(2+). In terms of biological role, aminopeptidase which specifically catalyzes the removal of glutamic acid or aspartic acid residues from the N-terminus of peptides. May play a role in the final step of host hemoglobin catabolism, by cleaving hemoglobin-derived oligopeptides in the cytoplasm. This is Aspartyl aminopeptidase from Plasmodium falciparum (isolate 3D7).